The chain runs to 97 residues: uncharacterized protein (97 aa).

An N-terminal signal peptide occupies residues 1–16 (MKQTVLLLFTALFLSG). A lipid anchor (N-palmitoyl cysteine) is attached at Cys17. Residue Cys17 is the site of S-diacylglycerol cysteine attachment.

The protein resides in the cell membrane. This is an uncharacterized protein from Bacillus subtilis (strain 168).